A 278-amino-acid polypeptide reads, in one-letter code: S-formylglutathione hydrolase YeiG (278 aa).

Catalysis depends on charge relay system residues Ser145, Asp223, and His256.

This sequence belongs to the esterase D family.

The enzyme catalyses S-formylglutathione + H2O = formate + glutathione + H(+). Its function is as follows. Serine hydrolase involved in the detoxification of formaldehyde. Hydrolyzes S-formylglutathione to glutathione and formate. The polypeptide is S-formylglutathione hydrolase YeiG (yeiG) (Shigella flexneri serotype 5b (strain 8401)).